A 420-amino-acid chain; its full sequence is Nucleobindin-2 (420 aa).

An N-terminal signal peptide occupies residues 1–24 (MRWRTIQARYCFLLVPCVLTALEA). The DNA-binding element occupies 171–223 (RTRHEEFKKYEMMKEHERREYLKTLSEEKRKEEEAKFAEMKRKHEDHPKVNHP). Residues 194–225 (TLSEEKRKEEEAKFAEMKRKHEDHPKVNHPGS) form a disordered region. The binds to necdin stretch occupies residues 213–420 (KHEDHPKVNH…AGELKFEPHT (208 aa)). 2 EF-hand domains span residues 241–276 (PNDF…ELDK) and 293–328 (ERLR…KEFL). Ca(2+) is bound by residues D254, N256, D258, E265, D306, N308, D310, and E317. The short motif at 304–334 (EIDNNKDRLVTLEEFLRATEKKEFLEPDSWE) is the GBA element. S332 carries the post-translational modification Phosphoserine. Basic and acidic residues predominate over residues 366-386 (DELQKQKEELQRQHDHLEAQK). The tract at residues 366–420 (DELQKQKEELQRQHDHLEAQKQEYQQAVQQLEQKKFQQGIAPSGPAGELKFEPHT) is disordered. Low complexity predominate over residues 387–396 (QEYQQAVQQL).

Belongs to the nucleobindin family. In terms of assembly, interacts (via GBA motif) with guanine nucleotide-binding protein G(i) alpha subunit GNAI3. Preferentially interacts with inactive rather than active GNAI3. Interaction with GNAI3 is inhibited when NUCB2 binds calcium, probably due to a conformational change which renders the GBA motif inaccessible. Binds to the postmitotic growth suppressor NDN; coexpression abolishes NUCB2 secretion. Interacts with MC4R.

Its subcellular location is the golgi apparatus. It is found in the endoplasmic reticulum. The protein resides in the nucleus envelope. The protein localises to the membrane. It localises to the cytoplasm. Its subcellular location is the secreted. Its function is as follows. Calcium-binding protein which may have a role in calcium homeostasis. Acts as a non-receptor guanine nucleotide exchange factor which binds to and activates guanine nucleotide-binding protein (G-protein) alpha subunit GNAI3. Anorexigenic peptide, seems to play an important role in hypothalamic pathways regulating food intake and energy homeostasis, acting in a leptin-independent manner. May also exert hypertensive roles and modulate blood pressure through directly acting on peripheral arterial resistance. In intestinal epithelial cells, plays a role in the inhibition of hepatic glucose production via MC4R receptor leading to increased cyclic adenosine monophosphate (cAMP) levels and glucagon-like peptide 1 (GLP-1) secretion. The sequence is that of Nucleobindin-2 (Nucb2) from Rattus norvegicus (Rat).